Reading from the N-terminus, the 107-residue chain is Iron-sulfur cluster assembly protein CyaY (107 aa).

The protein belongs to the frataxin family.

Involved in iron-sulfur (Fe-S) cluster assembly. May act as a regulator of Fe-S biogenesis. This Yersinia pseudotuberculosis serotype O:1b (strain IP 31758) protein is Iron-sulfur cluster assembly protein CyaY.